The chain runs to 324 residues: Esterase FPSE_08126 (324 aa).

Catalysis depends on residues Ser156, Asp255, and His285.

The protein belongs to the AB hydrolase 3 family.

Its function is as follows. Esterase; part of the Fusarium detoxification of benzoxazolinone cluster involved in the degradation of benzoxazolinones produced by the host plant. Maize, wheat, and rye produce the 2 benzoxazinone phytoanticipins 2,4-dihy-droxy-7-methoxy-1,4-benzoxazin-3-one (DIMBOA) and 2,4-dihydroxy-1,4-benzoxazin-3-one (DIBOA) that, due to their inherent instability once released, spontaneously degrade to the more stable corresponding benzoxazolinones, 6-methoxy-2-benzoxazolinone (MBOA) and 2-benzoxazolinone (BOA), respectively. The first step in the detoxification of benzoxazolinones involves the hydrolysis of the cyclic ester bond of benzoxazolinones by the gamma-lactamase FDB1 to aminophenols. FDB1 is able to convert 2-benzoxazolinone (BOA) into 2-aminophenol (2-AP), as well as 6-methoxy-2-benzoxazolinone (MBOA) into 5-methoxy-2-aminophenol (2-AMP). The N-malonyltransferase FDB2 then metabolizes aminophenols via N-malonylation to non-toxic malonamic acids. FDB2 converts 2-AP into N-(2-hydroxyphenyl) malonamic acid (HPMA) and 2-AMP into N-(2-hydroxy-4-methoxyphenyl) malonamic acid (HMPMA). The cluster also contains 2 transcription factors (FDB3 and FPSE_08121), an aldo-keto reductase (FPSE_08125) that possibly associates with a ketone component of BOA and MBOA degradation, an esterase (FPSE_08126), an acyl-CoA transferase (FPSE_08120), a solute carrier protein (FPSE_08119) and a transmembrane transporter (FPSE_08127) proposed to shuttle metabolites of benzoxazolinone degradation. The chain is Esterase FPSE_08126 from Fusarium pseudograminearum (strain CS3096) (Wheat and barley crown-rot fungus).